The sequence spans 147 residues: Hemoglobin subunit beta (147 aa).

Positions 3 to 147 (EWTDKERSII…VVSALGKQYH (145 aa)) constitute a Globin domain. Positions 64 and 93 each coordinate heme b.

It belongs to the globin family. As to quaternary structure, heterotetramer of two alpha chains and two beta chains. Red blood cells.

Involved in oxygen transport from gills to the various peripheral tissues. In Trematomus hansoni (Striped rockcod), this protein is Hemoglobin subunit beta (hbb).